Consider the following 271-residue polypeptide: Hematopoietically-expressed homeobox protein Hhex (271 aa).

Positions 1 to 138 (MQFPHPGPAA…PFLQRPLHKR (138 aa)) are interaction with SOX13. Position 54 is a phosphoserine (Ser54). The segment at residues 138–197 (RKGGQVRFSNDQTVELEKKFETQKYLSPPERKRLAKMLQLSERQVKTWFQNRRAKWRRLK) is a DNA-binding region (homeobox). A required for WNT signaling induction region spans residues 138-271 (RKGGQVRFSN…EGDKGYFNAG (134 aa)). A disordered region spans residues 195–271 (RLKQENPQSN…EGDKGYFNAG (77 aa)). The segment covering 212 to 242 (LDTSCEQGQDLPSEQNKGASLDRSQCSPSPA) has biased composition (polar residues). The segment covering 245–261 (EDPDSEISEDSDQEVDI) has biased composition (acidic residues).

As to quaternary structure, interacts with CD81; the interaction prevents nuclear translocation of HHEX. Interacts (via N-terminus) with SOX13; abolishes the SOX13-mediated inhibition of WNT-mediated transcriptional activity via competitive inhibition of the SOX13-TCF7 complex. Interacts with EIF4E; the interaction inhibits EIF4E-mediated mRNA nuclear export.

It localises to the nucleus. The protein localises to the nuclear body. Its subcellular location is the cytoplasm. Its function is as follows. Recognizes the DNA sequence 5'-ATTAA-3'. Transcriptional repressor. Activator of WNT-mediated transcription in conjunction with CTNNB1. Establishes anterior identity at two levels; acts early to enhance canonical WNT-signaling by repressing expression of TLE4, and acts later to inhibit NODAL-signaling by directly targeting NODAL. Inhibits EIF4E-mediated mRNA nuclear export. May play a role in hematopoietic differentiation. This chain is Hematopoietically-expressed homeobox protein Hhex (Hhex), found in Mus musculus (Mouse).